A 118-amino-acid chain; its full sequence is Small ribosomal subunit protein uS13 (118 aa).

It belongs to the universal ribosomal protein uS13 family. As to quaternary structure, part of the 30S ribosomal subunit. Forms a loose heterodimer with protein S19. Forms two bridges to the 50S subunit in the 70S ribosome.

Located at the top of the head of the 30S subunit, it contacts several helices of the 16S rRNA. In the 70S ribosome it contacts the 23S rRNA (bridge B1a) and protein L5 of the 50S subunit (bridge B1b), connecting the 2 subunits; these bridges are implicated in subunit movement. Contacts the tRNAs in the A and P-sites. The protein is Small ribosomal subunit protein uS13 of Carsonella ruddii (strain PV).